The sequence spans 440 residues: F-box protein pof12 (440 aa).

An F-box domain is found at 8 to 54; that stretch reads KNPASIFSHETLLHVLNDLSAHDLAALERVSRSWNSIVRRSSVWHNL.

In terms of assembly, interacts with skp1.

It localises to the nucleus. The chain is F-box protein pof12 (pof12) from Schizosaccharomyces pombe (strain 972 / ATCC 24843) (Fission yeast).